Consider the following 359-residue polypeptide: Peptide chain release factor 1 (359 aa).

Gln238 is subject to N5-methylglutamine.

Belongs to the prokaryotic/mitochondrial release factor family. In terms of processing, methylated by PrmC. Methylation increases the termination efficiency of RF1.

It is found in the cytoplasm. Functionally, peptide chain release factor 1 directs the termination of translation in response to the peptide chain termination codons UAG and UAA. The chain is Peptide chain release factor 1 from Rhodococcus jostii (strain RHA1).